Reading from the N-terminus, the 300-residue chain is Type 1 fimbrin D-mannose specific adhesin (300 aa).

Residues M1 to S21 form the signal peptide.

It belongs to the fimbrial protein family.

Its subcellular location is the fimbrium. Functionally, involved in regulation of length and mediation of adhesion of type 1 fimbriae (but not necessary for the production of fimbriae). Adhesin responsible for the binding to D-mannose. It is laterally positioned at intervals in the structure of the type 1 fimbriae. In order to integrate FimH in the fimbriae FimF and FimG are needed. The sequence is that of Type 1 fimbrin D-mannose specific adhesin (fimH) from Escherichia coli (strain K12).